Here is a 227-residue protein sequence, read N- to C-terminus: Orotate phosphoribosyltransferase 2 (227 aa).

Position 41–42 (41–42 (FF)) interacts with orotate. 5-phospho-alpha-D-ribose 1-diphosphate is bound by residues 79-80 (YK), R109, K110, K113, H115, and 135-143 (DDVMTAGTA). Orotate is bound by residues T139 and R167.

This sequence belongs to the purine/pyrimidine phosphoribosyltransferase family. PyrE subfamily. Homodimer.

The catalysed reaction is orotidine 5'-phosphate + diphosphate = orotate + 5-phospho-alpha-D-ribose 1-diphosphate. It functions in the pathway pyrimidine metabolism; UMP biosynthesis via de novo pathway; UMP from orotate: step 1/2. In terms of biological role, catalyzes the transfer of a ribosyl phosphate group from 5-phosphoribose 1-diphosphate to orotate, leading to the formation of orotidine monophosphate (OMP). The chain is Orotate phosphoribosyltransferase 2 (URA10) from Saccharomyces cerevisiae (strain ATCC 204508 / S288c) (Baker's yeast).